Consider the following 320-residue polypeptide: Protein MRG1 (320 aa).

The disordered stretch occupies residues 1–28; it reads MGSSSKEETASDGDTASGGASPSNDGRL. Positions 12 to 24 are enriched in polar residues; it reads DGDTASGGASPSN. A Tudor-knot domain is found at 30 to 80; the sequence is SEGERVLAYHGPRVYGAKVQKVELRKKEWKYFVHYLGWNKNWDEWVSADRL. The span at 93–104 shows a compositional bias: basic and acidic residues; it reads ALDKKQGVEKGT. A disordered region spans residues 93–147; the sequence is ALDKKQGVEKGTKSGRSAQTKTRSSADTKADKDDTKTNAAKGKKRKHESGNEKDN. Residues 106 to 115 show a composition bias toward polar residues; sequence SGRSAQTKTR. Positions 116–128 are enriched in basic and acidic residues; sequence SSADTKADKDDTK. The MRG domain occupies 150–318; the sequence is AEKLMKIQIP…KVSDGKGKGK (169 aa).

As to quaternary structure, interacts with HAM1 and HAM2. Interacts (via MRG domain) with CO. Component of the NuA4 histone acetyltransferase complex. Ubiquitous. Mainly expressed in the vasculature of cotyledons and leaves, and in roots and inflorescences.

The protein localises to the nucleus. Functionally, chromatin remodeling factor. Acts as a 'reader' protein by binding to H3K36me3 and H3K36me3 to control histone H4 acetylation. Increases the transcriptional levels of the flowering time genes FLC and FT. Binds the chromatin at the FT promoter upon interaction with CO. This Arabidopsis thaliana (Mouse-ear cress) protein is Protein MRG1.